A 360-amino-acid chain; its full sequence is MAIARLIVENFRNISAVDLEFDHGFNFLVGNNGSGKTSLLEALFYLGHGRSFKSSVTTRVIRYDQPHFTLHGRIRELQHEWSVGLQKQRKDGNTIVKINGEDGNKISDLAHLLPMQIITPEGLTLLNGGPSYRRAFLDWGLFHHQPNFHSAWSALHRLLKQRNAALNQTYDYNMLKPWDMELAKLAHQVSQWRADYAEALSPEIEQTCRLFLPELDIHVSFHQGWEKDTDYAQLLTENFERDKAIGYTVSGPQKADFRFKSNGLPVEDVLSRGQLKLLMCALRLAQGEHLMAQKNRHCIFLIDDFASELDETKRALLAQRLQNSNSQVFVTAISPEQLKQMQPEKHRTFQVVNGQIEQLL.

G30 to T37 provides a ligand contact to ATP.

It belongs to the RecF family.

The protein localises to the cytoplasm. In terms of biological role, the RecF protein is involved in DNA metabolism; it is required for DNA replication and normal SOS inducibility. RecF binds preferentially to single-stranded, linear DNA. It also seems to bind ATP. This is DNA replication and repair protein RecF from Mannheimia succiniciproducens (strain KCTC 0769BP / MBEL55E).